The following is a 569-amino-acid chain: Arginine--tRNA ligase (569 aa).

The short motif at 123–133 is the 'HIGH' region element; the sequence is PNIAKRMHIGH.

The protein belongs to the class-I aminoacyl-tRNA synthetase family. In terms of assembly, monomer.

The protein localises to the cytoplasm. The catalysed reaction is tRNA(Arg) + L-arginine + ATP = L-arginyl-tRNA(Arg) + AMP + diphosphate. In Fusobacterium nucleatum subsp. nucleatum (strain ATCC 25586 / DSM 15643 / BCRC 10681 / CIP 101130 / JCM 8532 / KCTC 2640 / LMG 13131 / VPI 4355), this protein is Arginine--tRNA ligase.